The sequence spans 317 residues: Retinol dehydrogenase 16 (317 aa).

33–57 (FITGCDSGFGTLLARQLDRRGMRVL) contacts NAD(+). Tyr-176 serves as the catalytic Proton acceptor. A helical membrane pass occupies residues 289–309 (LFYLPLSYLPTFLVDALLYWT).

The protein belongs to the short-chain dehydrogenases/reductases (SDR) family. As to quaternary structure, homodimer. Post-translationally, not glycosylated.

It localises to the endoplasmic reticulum membrane. It is found in the microsome membrane. The catalysed reaction is all-trans-retinol--[retinol-binding protein] + NAD(+) = all-trans-retinal--[retinol-binding protein] + NADH + H(+). The enzyme catalyses 9-cis-retinol + NAD(+) = 9-cis-retinal + NADH + H(+). It carries out the reaction 11-cis-retinol + NAD(+) = 11-cis-retinal + NADH + H(+). It catalyses the reaction 13-cis-retinol + NAD(+) = 13-cis-retinal + NADH + H(+). The catalysed reaction is androsterone + NAD(+) = 5alpha-androstan-3,17-dione + NADH + H(+). The enzyme catalyses 5alpha-androstane-3alpha,17beta-diol + NAD(+) = 17beta-hydroxy-5alpha-androstan-3-one + NADH + H(+). The protein operates within cofactor metabolism; retinol metabolism. Oxidoreductase with a preference for NAD. Oxidizes all-trans-retinol, 9-cis-retinol, 11-cis-retinol and 13-cis-retinol to the corresponding aldehydes. Has higher activity towards CRBP-bound retinol than with free retinol. Oxidizes 3-alpha-hydroxysteroids. Oxidizes androstanediol and androsterone to dihydrotestosterone and androstanedione. Can also catalyze the reverse reaction. The sequence is that of Retinol dehydrogenase 16 from Mus musculus (Mouse).